The sequence spans 120 residues: uncharacterized protein (120 aa).

The helical transmembrane segment at 63–83 (IDMSCVICFNFSCHLFVVIFI) threads the bilayer.

The protein localises to the membrane. This is an uncharacterized protein from Saccharomyces cerevisiae (strain ATCC 204508 / S288c) (Baker's yeast).